Reading from the N-terminus, the 279-residue chain is NAD kinase (279 aa).

The active-site Proton acceptor is Asp57. NAD(+) contacts are provided by residues 57 to 58, 133 to 134, Arg159, Asp161, 172 to 177, and Ala196; these read DG, NE, and TAYNKS.

The protein belongs to the NAD kinase family. Requires a divalent metal cation as cofactor.

It is found in the cytoplasm. It carries out the reaction NAD(+) + ATP = ADP + NADP(+) + H(+). Its function is as follows. Involved in the regulation of the intracellular balance of NAD and NADP, and is a key enzyme in the biosynthesis of NADP. Catalyzes specifically the phosphorylation on 2'-hydroxyl of the adenosine moiety of NAD to yield NADP. This is NAD kinase from Streptococcus thermophilus (strain CNRZ 1066).